The chain runs to 345 residues: Protein RecA (345 aa).

Position 63-70 (63-70 (GPESSGKT)) interacts with ATP. Positions 326–345 (VLSDALMTDPEPDADGTPED) are disordered. The span at 335–345 (PEPDADGTPED) shows a compositional bias: acidic residues.

Belongs to the RecA family.

It localises to the cytoplasm. Can catalyze the hydrolysis of ATP in the presence of single-stranded DNA, the ATP-dependent uptake of single-stranded DNA by duplex DNA, and the ATP-dependent hybridization of homologous single-stranded DNAs. It interacts with LexA causing its activation and leading to its autocatalytic cleavage. This Gluconobacter oxydans (strain 621H) (Gluconobacter suboxydans) protein is Protein RecA.